Here is a 61-residue protein sequence, read N- to C-terminus: UPF0434 protein PST_2635 (61 aa).

This sequence belongs to the UPF0434 family.

This chain is UPF0434 protein PST_2635, found in Stutzerimonas stutzeri (strain A1501) (Pseudomonas stutzeri).